A 375-amino-acid polypeptide reads, in one-letter code: DNA replication and repair protein RecF (375 aa).

34–41 is a binding site for ATP; sequence GDNGAGKT.

Belongs to the RecF family.

It is found in the cytoplasm. Its function is as follows. The RecF protein is involved in DNA metabolism; it is required for DNA replication and normal SOS inducibility. RecF binds preferentially to single-stranded, linear DNA. It also seems to bind ATP. The protein is DNA replication and repair protein RecF of Rhizobium rhizogenes (strain K84 / ATCC BAA-868) (Agrobacterium radiobacter).